The sequence spans 551 residues: Sialic acid-binding Ig-like lectin 5 (551 aa).

The signal sequence occupies residues 1–16 (MLPLLLLPLLWGGSLQ). The Extracellular portion of the chain corresponds to 17–441 (EKPVYELQVQ…LGTGVVPAAL (425 aa)). The 118-residue stretch at 19-136 (PVYELQVQKS…KYSYQQNKLN (118 aa)) folds into the Ig-like V-type domain. 3 cysteine pairs are disulfide-bonded: cysteine 36–cysteine 170, cysteine 41–cysteine 101, and cysteine 164–cysteine 213. Asparagine 100 is a glycosylation site (N-linked (GlcNAc...) asparagine). N-acetylneuraminate-binding residues include arginine 119, lysine 127, and serine 129. In terms of domain architecture, Ig-like C2-type 1 spans 146-229 (PDIHFLEPLE…AQVTTERTVQ (84 aa)). The tract at residues 189-210 (DPETTRSSELTLTPRPEDHGTN) is disordered. Residues asparagine 210, asparagine 231, and asparagine 253 are each glycosylated (N-linked (GlcNAc...) asparagine). In terms of domain architecture, Ig-like C2-type 2 spans 236–330 (PQTITIFRNG…GFLQIFLNLS (95 aa)). A disulfide bond links cysteine 269 and cysteine 314. Residues asparagine 328, asparagine 375, asparagine 384, and asparagine 393 are each glycosylated (N-linked (GlcNAc...) asparagine). Residues 442–462 (GGAGVMALLCICLCLIFFLIV) form a helical membrane-spanning segment. Residues 463 to 551 (KARRKQAAGR…TEYSEIKTSK (89 aa)) lie on the Cytoplasmic side of the membrane. The disordered stretch occupies residues 469–551 (AAGRPEKMDD…TEYSEIKTSK (83 aa)). Positions 518-523 (LHYASL) match the ITIM motif motif. Positions 528–537 (MKSREPKDQE) are enriched in basic and acidic residues. Positions 542-547 (TEYSEI) match the SLAM-like motif motif.

Belongs to the immunoglobulin superfamily. SIGLEC (sialic acid binding Ig-like lectin) family. In terms of tissue distribution, expressed by monocytic/myeloid lineage cells. Found at high levels in peripheral blood leukocytes, spleen, bone marrow and at lower levels in lymph node, lung, appendix, placenta, pancreas and thymus. Expressed by monocytes and neutrophils but absent from leukemic cell lines representing early stages of myelomonocytic differentiation.

The protein resides in the membrane. Putative adhesion molecule that mediates sialic-acid dependent binding to cells. Binds equally to alpha-2,3-linked and alpha-2,6-linked sialic acid. The sialic acid recognition site may be masked by cis interactions with sialic acids on the same cell surface. The polypeptide is Sialic acid-binding Ig-like lectin 5 (SIGLEC5) (Homo sapiens (Human)).